A 432-amino-acid chain; its full sequence is Putative D-alanyl-D-alanine carboxypeptidase (432 aa).

Residues 7 to 25 (ATVLLTFSLSAFAVEYPVL) traverse the membrane as a helical; Signal-anchor segment.

The protein belongs to the peptidase S12 family. YfeW subfamily.

The protein localises to the cell inner membrane. It catalyses the reaction Preferential cleavage: (Ac)2-L-Lys-D-Ala-|-D-Ala. Also transpeptidation of peptidyl-alanyl moieties that are N-acyl substituents of D-alanine.. This Salmonella enteritidis PT4 (strain P125109) protein is Putative D-alanyl-D-alanine carboxypeptidase.